Consider the following 620-residue polypeptide: Chaperone protein HscA homolog (620 aa).

Belongs to the heat shock protein 70 family.

Its function is as follows. Chaperone involved in the maturation of iron-sulfur cluster-containing proteins. Has a low intrinsic ATPase activity which is markedly stimulated by HscB. This is Chaperone protein HscA homolog from Shewanella sp. (strain MR-4).